Consider the following 332-residue polypeptide: Holliday junction branch migration complex subunit RuvB (332 aa).

The interval 1 to 181 (MARILDNNVM…FGITGHMEYY (181 aa)) is large ATPase domain (RuvB-L). Residues leucine 20, arginine 21, glycine 62, lysine 65, threonine 66, threonine 67, 128 to 130 (EDF), arginine 171, tyrosine 181, and arginine 218 each bind ATP. Residue threonine 66 coordinates Mg(2+). Positions 182–252 (QEKDLTEIVE…ITDRALTMLD (71 aa)) are small ATPAse domain (RuvB-S). The tract at residues 255 to 332 (REGLDYIDQK…RHLGYPYQNT (78 aa)) is head domain (RuvB-H). The DNA site is built by arginine 291, arginine 310, arginine 312, and arginine 315.

Belongs to the RuvB family. Homohexamer. Forms an RuvA(8)-RuvB(12)-Holliday junction (HJ) complex. HJ DNA is sandwiched between 2 RuvA tetramers; dsDNA enters through RuvA and exits via RuvB. An RuvB hexamer assembles on each DNA strand where it exits the tetramer. Each RuvB hexamer is contacted by two RuvA subunits (via domain III) on 2 adjacent RuvB subunits; this complex drives branch migration. In the full resolvosome a probable DNA-RuvA(4)-RuvB(12)-RuvC(2) complex forms which resolves the HJ.

The protein resides in the cytoplasm. The catalysed reaction is ATP + H2O = ADP + phosphate + H(+). The RuvA-RuvB-RuvC complex processes Holliday junction (HJ) DNA during genetic recombination and DNA repair, while the RuvA-RuvB complex plays an important role in the rescue of blocked DNA replication forks via replication fork reversal (RFR). RuvA specifically binds to HJ cruciform DNA, conferring on it an open structure. The RuvB hexamer acts as an ATP-dependent pump, pulling dsDNA into and through the RuvAB complex. RuvB forms 2 homohexamers on either side of HJ DNA bound by 1 or 2 RuvA tetramers; 4 subunits per hexamer contact DNA at a time. Coordinated motions by a converter formed by DNA-disengaged RuvB subunits stimulates ATP hydrolysis and nucleotide exchange. Immobilization of the converter enables RuvB to convert the ATP-contained energy into a lever motion, pulling 2 nucleotides of DNA out of the RuvA tetramer per ATP hydrolyzed, thus driving DNA branch migration. The RuvB motors rotate together with the DNA substrate, which together with the progressing nucleotide cycle form the mechanistic basis for DNA recombination by continuous HJ branch migration. Branch migration allows RuvC to scan DNA until it finds its consensus sequence, where it cleaves and resolves cruciform DNA. This chain is Holliday junction branch migration complex subunit RuvB, found in Streptococcus pyogenes serotype M1.